The chain runs to 847 residues: Mitogen-activated protein kinase kinase kinase 11 (847 aa).

At Ser-11 the chain carries Phosphoserine. Positions 11 to 38 are disordered; the sequence is SPLGSWNGSGSGGGGGGGGGRPEGSPKA. The span at 17–32 shows a compositional bias: gly residues; it reads NGSGSGGGGGGGGGRP. Ser-35 carries the phosphoserine modification. In terms of domain architecture, SH3 spans 41-105; the sequence is YANPVWTALF…PSNYVSRGGG (65 aa). A Protein kinase domain is found at 117-379; sequence LRLEEVIGIG…ASILQQLEAL (263 aa). ATP is bound by residues 123 to 131 and Lys-144; that span reads IGIGGFGKV. The Proton acceptor role is filled by Asp-241. Thr-277 bears the Phosphothreonine; by autocatalysis mark. Residue Ser-281 is modified to Phosphoserine; by autocatalysis and MAP4K1. Ser-394 is subject to Phosphoserine. 2 leucine-zipper regions span residues 403–424 and 438–459; these read IQGL…EEEL and LRRR…ELTL. Ser-507, Ser-524, Ser-548, Ser-555, and Ser-556 each carry phosphoserine. The interval 537-643 is disordered; sequence PAEPGQAWGR…SSGTPKLIQR (107 aa). Over residues 550–562 the composition is skewed to basic and acidic residues; the sequence is RRLEDSSNGERRA. Over residues 597–609 the composition is skewed to low complexity; the sequence is SSPLGSPSTPPAL. Phosphoserine is present on residues Ser-654, Ser-693, and Ser-705. The segment at 655-847 is disordered; the sequence is LGLGRDLQPP…QAPWVPEAGP (193 aa). Residues 676–694 are compositionally biased toward pro residues; that stretch reads TTPPTPTPAPCPTEPPPSP. Thr-708 bears the Phosphothreonine mark. A phosphoserine mark is found at Ser-724, Ser-727, Ser-740, Ser-748, Ser-758, Ser-770, Ser-789, Ser-793, and Ser-815. Residues 760 to 773 are compositionally biased toward low complexity; the sequence is PLGLISRPRPSPLR. Positions 787–799 are enriched in pro residues; that stretch reads RPSPLPSPQPAPR. Over residues 800 to 816 the composition is skewed to low complexity; it reads RAPWTLFPDSDPFWDSP.

Belongs to the protein kinase superfamily. STE Ser/Thr protein kinase family. MAP kinase kinase kinase subfamily. Homodimer; undergoes dimerization during activation. Interacts with MAP2K4/MKK4. Interacts with MAP2K7/MKK7. Found in a complex with SH3RF1, RAC1, MAP2K7/MKK7, MAPK8IP1/JIP1 and MAPK8/JNK1. Requires Mg(2+) as cofactor. In terms of processing, autophosphorylation on serine and threonine residues within the activation loop plays a role in enzyme activation. Thr-277 is likely to be the main autophosphorylation site. Phosphorylation of Ser-555 and Ser-556 is induced by CDC42. As to expression, expressed in a wide variety of normal and neoplastic tissues including fetal lung, liver, heart and kidney, and adult lung, liver, heart, kidney, placenta, skeletal muscle, pancreas and brain.

The protein resides in the cytoplasm. It localises to the cytoskeleton. The protein localises to the microtubule organizing center. Its subcellular location is the centrosome. It catalyses the reaction L-seryl-[protein] + ATP = O-phospho-L-seryl-[protein] + ADP + H(+). The catalysed reaction is L-threonyl-[protein] + ATP = O-phospho-L-threonyl-[protein] + ADP + H(+). With respect to regulation, homodimerization via the leucine zipper domains is required for autophosphorylation and subsequent activation. Functionally, activates the JUN N-terminal pathway. Required for serum-stimulated cell proliferation and for mitogen and cytokine activation of MAPK14 (p38), MAPK3 (ERK) and MAPK8 (JNK1) through phosphorylation and activation of MAP2K4/MKK4 and MAP2K7/MKK7. Plays a role in mitogen-stimulated phosphorylation and activation of BRAF, but does not phosphorylate BRAF directly. Influences microtubule organization during the cell cycle. This is Mitogen-activated protein kinase kinase kinase 11 from Homo sapiens (Human).